The chain runs to 236 residues: Biosynthetic peptidoglycan transglycosylase (236 aa).

A helical transmembrane segment spans residues 12–31 (ALLWFVAGSIVLVLVFRWVP).

It belongs to the glycosyltransferase 51 family.

The protein resides in the cell inner membrane. It carries out the reaction [GlcNAc-(1-&gt;4)-Mur2Ac(oyl-L-Ala-gamma-D-Glu-L-Lys-D-Ala-D-Ala)](n)-di-trans,octa-cis-undecaprenyl diphosphate + beta-D-GlcNAc-(1-&gt;4)-Mur2Ac(oyl-L-Ala-gamma-D-Glu-L-Lys-D-Ala-D-Ala)-di-trans,octa-cis-undecaprenyl diphosphate = [GlcNAc-(1-&gt;4)-Mur2Ac(oyl-L-Ala-gamma-D-Glu-L-Lys-D-Ala-D-Ala)](n+1)-di-trans,octa-cis-undecaprenyl diphosphate + di-trans,octa-cis-undecaprenyl diphosphate + H(+). It functions in the pathway cell wall biogenesis; peptidoglycan biosynthesis. Functionally, peptidoglycan polymerase that catalyzes glycan chain elongation from lipid-linked precursors. The protein is Biosynthetic peptidoglycan transglycosylase of Pseudomonas putida (strain ATCC 700007 / DSM 6899 / JCM 31910 / BCRC 17059 / LMG 24140 / F1).